A 157-amino-acid polypeptide reads, in one-letter code: Protein-export protein SecB (157 aa).

It belongs to the SecB family. As to quaternary structure, homotetramer, a dimer of dimers. One homotetramer interacts with 1 SecA dimer.

The protein localises to the cytoplasm. Functionally, one of the proteins required for the normal export of preproteins out of the cell cytoplasm. It is a molecular chaperone that binds to a subset of precursor proteins, maintaining them in a translocation-competent state. It also specifically binds to its receptor SecA. This Methylobacillus flagellatus (strain ATCC 51484 / DSM 6875 / VKM B-1610 / KT) protein is Protein-export protein SecB.